The sequence spans 739 residues: Phosphoribosylformylglycinamidine synthase subunit PurL (739 aa).

Residue His54 is part of the active site. Positions 57 and 96 each coordinate ATP. A Mg(2+)-binding site is contributed by Glu98. Substrate is bound by residues 99 to 102 and Arg121; that span reads SHNH. Catalysis depends on His100, which acts as the Proton acceptor. Asp122 is a Mg(2+) binding site. Gln245 contributes to the substrate binding site. Asp273 contributes to the Mg(2+) binding site. 317–319 lines the substrate pocket; the sequence is ESQ. ATP-binding residues include Asp500 and Gly537. A Mg(2+)-binding site is contributed by Asn538. Ser540 lines the substrate pocket.

This sequence belongs to the FGAMS family. In terms of assembly, monomer. Part of the FGAM synthase complex composed of 1 PurL, 1 PurQ and 2 PurS subunits.

The protein localises to the cytoplasm. It catalyses the reaction N(2)-formyl-N(1)-(5-phospho-beta-D-ribosyl)glycinamide + L-glutamine + ATP + H2O = 2-formamido-N(1)-(5-O-phospho-beta-D-ribosyl)acetamidine + L-glutamate + ADP + phosphate + H(+). It participates in purine metabolism; IMP biosynthesis via de novo pathway; 5-amino-1-(5-phospho-D-ribosyl)imidazole from N(2)-formyl-N(1)-(5-phospho-D-ribosyl)glycinamide: step 1/2. Part of the phosphoribosylformylglycinamidine synthase complex involved in the purines biosynthetic pathway. Catalyzes the ATP-dependent conversion of formylglycinamide ribonucleotide (FGAR) and glutamine to yield formylglycinamidine ribonucleotide (FGAM) and glutamate. The FGAM synthase complex is composed of three subunits. PurQ produces an ammonia molecule by converting glutamine to glutamate. PurL transfers the ammonia molecule to FGAR to form FGAM in an ATP-dependent manner. PurS interacts with PurQ and PurL and is thought to assist in the transfer of the ammonia molecule from PurQ to PurL. The sequence is that of Phosphoribosylformylglycinamidine synthase subunit PurL from Bacillus cytotoxicus (strain DSM 22905 / CIP 110041 / 391-98 / NVH 391-98).